Consider the following 188-residue polypeptide: dCTP deaminase (188 aa).

Residue 109–114 (KSTYAR) participates in dCTP binding. The active-site Proton donor/acceptor is glutamate 135. The dCTP site is built by glutamine 154, tyrosine 168, and glutamine 178.

Belongs to the dCTP deaminase family. In terms of assembly, homotrimer.

The enzyme catalyses dCTP + H2O + H(+) = dUTP + NH4(+). The protein operates within pyrimidine metabolism; dUMP biosynthesis; dUMP from dCTP (dUTP route): step 1/2. Functionally, catalyzes the deamination of dCTP to dUTP. This is dCTP deaminase from Helicobacter acinonychis (strain Sheeba).